We begin with the raw amino-acid sequence, 157 residues long: 2-C-methyl-D-erythritol 2,4-cyclodiphosphate synthase (157 aa).

2 residues coordinate a divalent metal cation: Asp8 and His10. 4-CDP-2-C-methyl-D-erythritol 2-phosphate contacts are provided by residues 8-10 (DVH) and 34-35 (HS). Position 42 (His42) interacts with a divalent metal cation. Residues 56 to 58 (DIG), 61 to 65 (FPDTD), 100 to 106 (AQAPKMA), 132 to 135 (TTTE), Phe139, and Arg142 contribute to the 4-CDP-2-C-methyl-D-erythritol 2-phosphate site.

It belongs to the IspF family. As to quaternary structure, homotrimer. Requires a divalent metal cation as cofactor.

The enzyme catalyses 4-CDP-2-C-methyl-D-erythritol 2-phosphate = 2-C-methyl-D-erythritol 2,4-cyclic diphosphate + CMP. It participates in isoprenoid biosynthesis; isopentenyl diphosphate biosynthesis via DXP pathway; isopentenyl diphosphate from 1-deoxy-D-xylulose 5-phosphate: step 4/6. In terms of biological role, involved in the biosynthesis of isopentenyl diphosphate (IPP) and dimethylallyl diphosphate (DMAPP), two major building blocks of isoprenoid compounds. Catalyzes the conversion of 4-diphosphocytidyl-2-C-methyl-D-erythritol 2-phosphate (CDP-ME2P) to 2-C-methyl-D-erythritol 2,4-cyclodiphosphate (ME-CPP) with a corresponding release of cytidine 5-monophosphate (CMP). The chain is 2-C-methyl-D-erythritol 2,4-cyclodiphosphate synthase from Pseudomonas paraeruginosa (strain DSM 24068 / PA7) (Pseudomonas aeruginosa (strain PA7)).